A 264-amino-acid chain; its full sequence is uncharacterized protein (264 aa).

An N-terminal signal peptide occupies residues 1-23; sequence MQQWNLTISNILIGLFFCFSAQA.

This is an uncharacterized protein from Shewanella oneidensis (strain ATCC 700550 / JCM 31522 / CIP 106686 / LMG 19005 / NCIMB 14063 / MR-1).